A 188-amino-acid chain; its full sequence is MLQLHPSDIKDIILQGGVIAYPTEAVYGLGCDPDNDTAILKLLAVKQRPWQKGLILVASDFQQLLAYVDESQLTAEQLEFAFSKWPGPFTFVMPIKAQVSKYLCGEFDSIAVRVSAHAGVQALCRALNKPLVSTSANLAGEDPALTAAEILADFTGKIDALVLGELGEQRQPSTIIDARSGKILRNGQ.

The YrdC-like domain occupies Gln3–Gln188.

Belongs to the SUA5 family. TsaC subfamily.

It localises to the cytoplasm. It carries out the reaction L-threonine + hydrogencarbonate + ATP = L-threonylcarbamoyladenylate + diphosphate + H2O. Its function is as follows. Required for the formation of a threonylcarbamoyl group on adenosine at position 37 (t(6)A37) in tRNAs that read codons beginning with adenine. Catalyzes the conversion of L-threonine, HCO(3)(-)/CO(2) and ATP to give threonylcarbamoyl-AMP (TC-AMP) as the acyladenylate intermediate, with the release of diphosphate. In Shewanella baltica (strain OS195), this protein is Threonylcarbamoyl-AMP synthase.